A 201-amino-acid polypeptide reads, in one-letter code: Thymidylate kinase (201 aa).

ATP is bound at residue 7–14; it reads GGEGSGKT.

Belongs to the thymidylate kinase family.

The enzyme catalyses dTMP + ATP = dTDP + ADP. Its function is as follows. Phosphorylation of dTMP to form dTDP in both de novo and salvage pathways of dTTP synthesis. This Acholeplasma laidlawii (strain PG-8A) protein is Thymidylate kinase.